The chain runs to 953 residues: Calcium-transporting ATPase type 2C member 1 (953 aa).

At 1–104 the chain is on the cytoplasmic side; that stretch reads MDNLLPQSRF…NEFDISEDEP (104 aa). The chain crosses the membrane as a helical span at residues 105 to 125; sequence LWKKYISQFKNPLIMLLLASA. Topologically, residues 126-138 are lumenal; sequence VISVLMHQFDDAV. Residues 139–157 traverse the membrane as a helical segment; sequence SITVAILIVVTVAFVQEYR. Residues 158–296 lie on the Cytoplasmic side of the membrane; that stretch reads SEKSLEELSK…APKTPLQKSM (139 aa). A helical membrane pass occupies residues 297-316; sequence DLLGKQLSFYSFGIIGIIML. At 317–328 the chain is on the lumenal side; sequence VGWLLGKDILEM. The chain crosses the membrane as a helical span at residues 329-346; sequence FTISVSLAVAAIPEGLPI. Residues V337, A338, I340, and E342 each contribute to the Ca(2+) site. At 347 to 733 the chain is on the cytoplasmic side; sequence VVTVTLALGV…EEGKGIYNNI (387 aa). Residue D384 is the 4-aspartylphosphate intermediate of the active site. Residues D678 and D682 each contribute to the Mg(2+) site. The helical transmembrane segment at 734 to 753 threads the bilayer; sequence KNFVRFQLSTSIAALTLISL. Residues 754–763 lie on the Lumenal side of the membrane; sequence ATLMNFPNPL. Residues 764–784 traverse the membrane as a helical segment; that stretch reads NAMQILWINIIMDGPPAQSLG. Ca(2+)-binding residues include N772 and D776. The Cytoplasmic segment spans residues 785 to 804; sequence VEPVDKDVIRKPPRNWKDSI. A helical membrane pass occupies residues 805–824; the sequence is LTKNLILKILVSSIIIVCGT. The Lumenal segment spans residues 825–842; the sequence is LFVFWRELRDNVITPRDT. Residues 843 to 862 form a helical membrane-spanning segment; that stretch reads TMTFTCFVFFDMFNALSSRS. At 863–875 the chain is on the cytoplasmic side; sequence QTKSVFEIGLCSN. A helical transmembrane segment spans residues 876-894; it reads KMFCYAVLGSIMGQLLVIY. Residues 895-909 are Lumenal-facing; it reads FPPLQKVFQTESLSI. Residues 910-930 form a helical membrane-spanning segment; that stretch reads LDLLFLLGLTSSVCIVAEIIK. Over 931–953 the chain is Cytoplasmic; it reads KVERSREKIQKPVSSTSSSFLEV.

The protein belongs to the cation transport ATPase (P-type) (TC 3.A.3) family. Type IIA subfamily. Monomer. Homodimer.

It is found in the golgi apparatus. It localises to the trans-Golgi network membrane. The protein resides in the golgi stack membrane. It catalyses the reaction Ca(2+)(in) + ATP + H2O = Ca(2+)(out) + ADP + phosphate + H(+). The catalysed reaction is Mn(2+)(in) + ATP + H2O = Mn(2+)(out) + ADP + phosphate + H(+). Its function is as follows. ATP-driven pump that supplies the Golgi apparatus with Ca(2+) and Mn(2+) ions, both essential cofactors for processing and trafficking of newly synthesized proteins in the secretory pathway. Within a catalytic cycle, acquires Ca(2+) or Mn(2+) ions on the cytoplasmic side of the membrane and delivers them to the lumenal side. The transfer of ions across the membrane is coupled to ATP hydrolysis and is associated with a transient phosphorylation that shifts the pump conformation from inward-facing to outward-facing state. Plays a primary role in the maintenance of Ca(2+) homeostasis in the trans-Golgi compartment with a functional impact on Golgi and post-Golgi protein sorting as well as a structural impact on cisternae morphology. Responsible for loading the Golgi stores with Ca(2+) ions in keratinocytes, contributing to keratinocyte differentiation and epidermis integrity. Participates in Ca(2+) and Mn(2+) ions uptake into the Golgi store of hippocampal neurons and regulates protein trafficking required for neural polarity. May also play a role in the maintenance of Ca(2+) and Mn(2+) homeostasis and signaling in the cytosol while preventing cytotoxicity. The protein is Calcium-transporting ATPase type 2C member 1 (ATP2C1) of Bos taurus (Bovine).